Reading from the N-terminus, the 77-residue chain is Exodeoxyribonuclease 7 small subunit (77 aa).

The protein belongs to the XseB family. Heterooligomer composed of large and small subunits.

It localises to the cytoplasm. It catalyses the reaction Exonucleolytic cleavage in either 5'- to 3'- or 3'- to 5'-direction to yield nucleoside 5'-phosphates.. Its function is as follows. Bidirectionally degrades single-stranded DNA into large acid-insoluble oligonucleotides, which are then degraded further into small acid-soluble oligonucleotides. This chain is Exodeoxyribonuclease 7 small subunit, found in Chromobacterium violaceum (strain ATCC 12472 / DSM 30191 / JCM 1249 / CCUG 213 / NBRC 12614 / NCIMB 9131 / NCTC 9757 / MK).